The chain runs to 248 residues: Triosephosphate isomerase (248 aa).

A substrate-binding site is contributed by 9–11 (NWK). His-94 acts as the Electrophile in catalysis. Glu-166 (proton acceptor) is an active-site residue. Residues Gly-172, Ser-212, and 233–234 (GG) each bind substrate.

This sequence belongs to the triosephosphate isomerase family. As to quaternary structure, homodimer.

Its subcellular location is the cytoplasm. The enzyme catalyses D-glyceraldehyde 3-phosphate = dihydroxyacetone phosphate. The protein operates within carbohydrate biosynthesis; gluconeogenesis. Its pathway is carbohydrate degradation; glycolysis; D-glyceraldehyde 3-phosphate from glycerone phosphate: step 1/1. In terms of biological role, involved in the gluconeogenesis. Catalyzes stereospecifically the conversion of dihydroxyacetone phosphate (DHAP) to D-glyceraldehyde-3-phosphate (G3P). The chain is Triosephosphate isomerase from Caldanaerobacter subterraneus subsp. tengcongensis (strain DSM 15242 / JCM 11007 / NBRC 100824 / MB4) (Thermoanaerobacter tengcongensis).